The primary structure comprises 292 residues: Elongation factor Ts (292 aa).

Residues 82–85 form an involved in Mg(2+) ion dislocation from EF-Tu region; it reads TDFV.

This sequence belongs to the EF-Ts family.

It localises to the cytoplasm. Functionally, associates with the EF-Tu.GDP complex and induces the exchange of GDP to GTP. It remains bound to the aminoacyl-tRNA.EF-Tu.GTP complex up to the GTP hydrolysis stage on the ribosome. In Legionella pneumophila subsp. pneumophila (strain Philadelphia 1 / ATCC 33152 / DSM 7513), this protein is Elongation factor Ts.